The sequence spans 549 residues: Threonine--tRNA ligase catalytic subunit (549 aa).

The tract at residues 142 to 437 (DHRIIGDRLD…LLEHFRGKLP (296 aa)) is catalytic. Zn(2+) is bound by residues Cys235, His286, and His414.

This sequence belongs to the class-II aminoacyl-tRNA synthetase family. In terms of assembly, homodimer. Probably interacts with its editing subunit. The cofactor is Zn(2+).

Its subcellular location is the cytoplasm. It carries out the reaction tRNA(Thr) + L-threonine + ATP = L-threonyl-tRNA(Thr) + AMP + diphosphate + H(+). Catalyzes the attachment of threonine to tRNA(Thr) in a two-step reaction: L-threonine is first activated by ATP to form Thr-AMP and then transferred to the acceptor end of tRNA(Thr). Also activates L-serine and transfers it to tRNA(Thr) but cannot deacylate incorrectly charged amino acid; unlike most archaea the editing function is found in a freestanding protein. The polypeptide is Threonine--tRNA ligase catalytic subunit (Sulfolobus acidocaldarius (strain ATCC 33909 / DSM 639 / JCM 8929 / NBRC 15157 / NCIMB 11770)).